Consider the following 524-residue polypeptide: MISPFLLLAIGTCFASSLVPEKEKDPKYWRDQAQQTLKNALRLQTLNTNVAKNVIMFLGDGMGVSTVTAARILKGQLHHSPGEETKLEMDKFPYVALSKTYNTNAQVPDSAGTATAYLCGVKANEGTVGVSAATQRSQCNTTQGNEVTSILRWAKDAGKSVGIVTTTRVNHATPSASYAHSADRDWYSDNEMPPEALSQGCKDIAYQLMHNIKDIEVIMGGGRKYMFPKNRTDVEYELDEKARGTRLDGLNLIDIWKSFKPKHKHSHYVWNRTDLLALDPHSVDYLLGLFEPGDMQYELNRNNATDPSLSEMVEMAIRILNKNPKGFFLLVEGGRIDHGHHEGKAKQALHEAVEMDQAIGQAGAMTSVEDTLTVVTADHSHVFTFGGYTPRGNSIFGLAPMVSDTDKKPFTAILYGNGPGYKVVGGERENVSMVDYAHNNYQAQSAVPLRHETHGGEDVAVFAKGPMAHLLHGVHEQNYIPHVMAYAACIGANRDHCASASSSGSPSPGPLLLLLALLPLGSLF.

Positions 1 to 17 (MISPFLLLAIGTCFASS) are cleaved as a signal peptide. Asp60 lines the Mg(2+) pocket. Asp60 and Ser110 together coordinate Zn(2+). The Phosphoserine intermediate role is filled by Ser110. Ser110 carries the phosphoserine modification. Cys139 and Cys201 are oxidised to a cystine. A glycan (N-linked (GlcNAc...) asparagine) is linked at Asn140. Thr173 provides a ligand contact to Mg(2+). Asn230 carries an N-linked (GlcNAc...) asparagine glycan. Glu235 lines the Ca(2+) pocket. N-linked (GlcNAc...) asparagine glycosylation is present at Asn271. Positions 290 and 291 each coordinate Ca(2+). Asn303 is a glycosylation site (N-linked (GlcNAc...) asparagine). Asp306 serves as a coordination point for Ca(2+). Glu332 is a binding site for Mg(2+). Residues Asp337, His341, Asp378, and His379 each contribute to the Zn(2+) site. N-linked (GlcNAc...) asparagine glycosylation occurs at Asn430. A Zn(2+)-binding site is contributed by His454. An intrachain disulfide couples Cys489 to Cys497. A lipid anchor (GPI-anchor amidated serine) is attached at Ser499. A propeptide spans 500-524 (ASSSGSPSPGPLLLLLALLPLGSLF) (removed in mature form).

It belongs to the alkaline phosphatase family. Homodimer. It depends on Mg(2+) as a cofactor. Zn(2+) serves as cofactor. The cofactor is Ca(2+). Post-translationally, N-glycosylated.

The protein localises to the cell membrane. It localises to the extracellular vesicle membrane. Its subcellular location is the mitochondrion membrane. It is found in the mitochondrion intermembrane space. It catalyses the reaction a phosphate monoester + H2O = an alcohol + phosphate. The enzyme catalyses diphosphate + H2O = 2 phosphate + H(+). It carries out the reaction pyridoxal 5'-phosphate + H2O = pyridoxal + phosphate. The catalysed reaction is phosphoethanolamine + H2O = ethanolamine + phosphate. It catalyses the reaction N-phosphocreatine + H2O = creatine + phosphate. The enzyme catalyses ATP + H2O = ADP + phosphate + H(+). It carries out the reaction ADP + H2O = AMP + phosphate + H(+). The catalysed reaction is AMP + H2O = adenosine + phosphate. With respect to regulation, phosphatase activity is specifically inhibited by 5-((5-chloro-2-methoxyphenyl)sulfonamido)nicotinamide (SBI-425). Functionally, alkaline phosphatase that metabolizes various phosphate compounds and plays a key role in skeletal mineralization and adaptive thermogenesis. Has broad substrate specificity and can hydrolyze a considerable variety of compounds: however, only a few substrates, such as diphosphate (inorganic pyrophosphate; PPi), pyridoxal 5'-phosphate (PLP) and N-phosphocreatine are natural substrates. Plays an essential role in skeletal and dental mineralization via its ability to hydrolyze extracellular diphosphate, a potent mineralization inhibitor, to phosphate: it thereby promotes hydroxyapatite crystal formation and increases inorganic phosphate concentration. Acts in a non-redundant manner with PHOSPHO1 in skeletal mineralization: while PHOSPHO1 mediates the initiation of hydroxyapatite crystallization in the matrix vesicles (MVs), ALPL/TNAP catalyzes the spread of hydroxyapatite crystallization in the extracellular matrix. Also promotes dephosphorylation of osteopontin (SSP1), an inhibitor of hydroxyapatite crystallization in its phosphorylated state; it is however unclear whether ALPL/TNAP mediates SSP1 dephosphorylation via a direct or indirect manner. Catalyzes dephosphorylation of PLP to pyridoxal (PL), the transportable form of vitamin B6, in order to provide a sufficient amount of PLP in the brain, an essential cofactor for enzymes catalyzing the synthesis of diverse neurotransmitters. Additionally, also able to mediate ATP degradation in a stepwise manner to adenosine, thereby regulating the availability of ligands for purinergic receptors. Also capable of dephosphorylating microbial products, such as lipopolysaccharides (LPS) as well as other phosphorylated small-molecules, such as poly-inosine:cytosine (poly I:C). Acts as a key regulator of adaptive thermogenesis as part of the futile creatine cycle: localizes to the mitochondria of thermogenic fat cells and acts by mediating hydrolysis of N-phosphocreatine to initiate a futile cycle of creatine dephosphorylation and phosphorylation. During the futile creatine cycle, creatine and N-phosphocreatine are in a futile cycle, which dissipates the high energy charge of N-phosphocreatine as heat without performing any mechanical or chemical work. The sequence is that of Alkaline phosphatase, tissue-nonspecific isozyme (ALPL) from Bos taurus (Bovine).